The following is a 148-amino-acid chain: MKGYSMSVDENNARARIVEADISLKDAVNIAHHIRGMKLDYAKQILEDVVSKKYAIPYFRYLDSVSHRPGKGPGRYPVKAAKVFIDLLSNVENNAEFKGMNTDSLIIKHVAANKGRMIKKYTPKAYGRAGANFKDLINLEVIVTEGDQ.

This sequence belongs to the universal ribosomal protein uL22 family. In terms of assembly, part of the 50S ribosomal subunit.

In terms of biological role, this protein binds specifically to 23S rRNA. It makes multiple contacts with different domains of the 23S rRNA in the assembled 50S subunit and ribosome. Its function is as follows. The globular domain of the protein is located near the polypeptide exit tunnel on the outside of the subunit, while an extended beta-hairpin is found that lines the wall of the exit tunnel in the center of the 70S ribosome. This chain is Large ribosomal subunit protein uL22, found in Thermoplasma volcanium (strain ATCC 51530 / DSM 4299 / JCM 9571 / NBRC 15438 / GSS1).